A 340-amino-acid polypeptide reads, in one-letter code: Solute carrier family 35 member G3 (340 aa).

The segment at 11–31 (PDFTQPSPPSTPSSLTSNHHN) is disordered. The next 9 helical transmembrane spans lie at 39–59 (TKGLFVALLGGGLSAGFVGPF), 69–89 (LPSLELLIFRCLFHLPIALIL), 107–127 (FLHAILNVLSIGCAYSAVQVV), 160–180 (AWCGLFGSTLGLIIIVGPGLG), 189–209 (LYTALGYVLAFLGGLALSLGL), 223–243 (TVAFLFGLVGLIVSVPGLFVL), 257–277 (CMVAVGLLALVSFVCVSYAVT), 283–303 (LVCAVLHSEVVVALMLQYYVL), and 307–327 (VAPSDIMGAGVVLGSIAIITA). The 126-residue stretch at 51-176 (LSAGFVGPFS…STLGLIIIVG (126 aa)) folds into the EamA 1 domain. Positions 223–327 (TVAFLFGLVG…VLGSIAIITA (105 aa)) constitute an EamA 2 domain.

The protein belongs to the SLC35G solute transporter family.

It localises to the membrane. In Rattus norvegicus (Rat), this protein is Solute carrier family 35 member G3 (Slc35g3).